Here is a 342-residue protein sequence, read N- to C-terminus: MQTLQTTSLRVSENQLFILDQQALPQETRWLAADNVALLVDHIHTLRVRGAPLIGLSASLLLALLAQRGLNRDALQQALETLRAARPTAVNLMNNLDRMKQALAREDYPQALEAEALRLVEEDKQLCARIAEAGSALVKPGSRLLTHCNTGGLATAGVGTALGVIALAHRQGKVTNVWVDETRPLLQGGRLTAWELGELGVPYQLIADSMAASLMAQGQVDAVWVGADRIAANGDVANKIGTYSLAVLAHYHQIPFYVAAPQTTLDRYCPNGAAIPIEQRAAAEVTGVAGSFGAVQWAPTGAAVYNPAFDVTPAGLISGWVLDSGVVTPAQVAAGAFAPDNG.

Residues 49–51 (RGA), arginine 86, and glutamine 187 each bind substrate. The active-site Proton donor is aspartate 228. Residue 238-239 (NK) coordinates substrate.

This sequence belongs to the eIF-2B alpha/beta/delta subunits family. MtnA subfamily.

The catalysed reaction is 5-(methylsulfanyl)-alpha-D-ribose 1-phosphate = 5-(methylsulfanyl)-D-ribulose 1-phosphate. The protein operates within amino-acid biosynthesis; L-methionine biosynthesis via salvage pathway; L-methionine from S-methyl-5-thio-alpha-D-ribose 1-phosphate: step 1/6. Its function is as follows. Catalyzes the interconversion of methylthioribose-1-phosphate (MTR-1-P) into methylthioribulose-1-phosphate (MTRu-1-P). This chain is Methylthioribose-1-phosphate isomerase, found in Klebsiella pneumoniae subsp. pneumoniae (strain ATCC 700721 / MGH 78578).